A 152-amino-acid chain; its full sequence is Ribonuclease pancreatic beta-type (152 aa).

The N-terminal stretch at 1–25 (MGLEKSFILFSLLVLVLGWVQPSLG) is a signal peptide. Positions 31 to 45 (SSADKFKRQHMDPES) are enriched in basic and acidic residues. Positions 31–53 (SSADKFKRQHMDPESPSKSSPTY) are disordered. The substrate site is built by Lys35 and Arg38. The Proton acceptor role is filled by His40. 4 cysteine pairs are disulfide-bonded: Cys54–Cys112, Cys68–Cys123, Cys86–Cys138, and Cys93–Cys100. Residues 69-73 (KPVNT), Lys94, and Arg113 contribute to the substrate site. Residue His147 is the Proton donor of the active site.

Belongs to the pancreatic ribonuclease family. As to quaternary structure, monomer.

It localises to the secreted. The catalysed reaction is an [RNA] containing cytidine + H2O = an [RNA]-3'-cytidine-3'-phosphate + a 5'-hydroxy-ribonucleotide-3'-[RNA].. The enzyme catalyses an [RNA] containing uridine + H2O = an [RNA]-3'-uridine-3'-phosphate + a 5'-hydroxy-ribonucleotide-3'-[RNA].. Endonuclease that catalyzes the cleavage of RNA on the 3' side of pyrimidine nucleotides. Acts on single-stranded and double-stranded RNA. This Rattus exulans (Polynesian rat) protein is Ribonuclease pancreatic beta-type.